The following is a 400-amino-acid chain: Tyrosine--tRNA ligase (400 aa).

The 'HIGH' region signature appears at 45–54 (PTAPDLHLGH). Residues 230–234 (KMSKS) carry the 'KMSKS' region motif. Lys-233 contacts ATP. Residues 339 to 399 (EWIARVLVIA…GKRRFAKVII (61 aa)) form the S4 RNA-binding domain.

The protein belongs to the class-I aminoacyl-tRNA synthetase family. TyrS type 2 subfamily. As to quaternary structure, homodimer.

It localises to the cytoplasm. It carries out the reaction tRNA(Tyr) + L-tyrosine + ATP = L-tyrosyl-tRNA(Tyr) + AMP + diphosphate + H(+). Functionally, catalyzes the attachment of tyrosine to tRNA(Tyr) in a two-step reaction: tyrosine is first activated by ATP to form Tyr-AMP and then transferred to the acceptor end of tRNA(Tyr). The sequence is that of Tyrosine--tRNA ligase from Helicobacter hepaticus (strain ATCC 51449 / 3B1).